A 274-amino-acid polypeptide reads, in one-letter code: NADPH-dependent 7-cyano-7-deazaguanine reductase (274 aa).

80 to 82 (VES) contributes to the substrate binding site. 82-83 (SK) provides a ligand contact to NADPH. The Thioimide intermediate role is filled by Cys181. Asp188 functions as the Proton donor in the catalytic mechanism. 220-221 (HE) is a binding site for substrate. 249-250 (RG) lines the NADPH pocket.

The protein belongs to the GTP cyclohydrolase I family. QueF type 2 subfamily. Homodimer.

It is found in the cytoplasm. It catalyses the reaction 7-aminomethyl-7-carbaguanine + 2 NADP(+) = 7-cyano-7-deazaguanine + 2 NADPH + 3 H(+). It functions in the pathway tRNA modification; tRNA-queuosine biosynthesis. Catalyzes the NADPH-dependent reduction of 7-cyano-7-deazaguanine (preQ0) to 7-aminomethyl-7-deazaguanine (preQ1). The polypeptide is NADPH-dependent 7-cyano-7-deazaguanine reductase (Burkholderia lata (strain ATCC 17760 / DSM 23089 / LMG 22485 / NCIMB 9086 / R18194 / 383)).